The following is a 206-amino-acid chain: GTP-binding protein YPTC5 (206 aa).

Residue 15 to 22 (GDSGVGKT) participates in GTP binding. The Effector region motif lies at 37–45 (YKATIGADF). Residues 63-67 (DTAGQ) and 125-128 (NKID) contribute to the GTP site. Residues Cys205 and Cys206 are each lipidated (S-geranylgeranyl cysteine).

It belongs to the small GTPase superfamily. Rab family.

Its subcellular location is the cell membrane. Protein transport. Probably involved in vesicular traffic. In Chlamydomonas reinhardtii (Chlamydomonas smithii), this protein is GTP-binding protein YPTC5 (YPTC5).